The primary structure comprises 547 residues: Riboflavin transporter RibJ (547 aa).

Residues 1–11 (MLPSFTRKPAD) are Cytoplasmic-facing. A helical membrane pass occupies residues 12–32 (HPIGYLVALSGLLMQLMSYGI). At 33–58 (DNSYSIFSEDMHNDPSLGFPSITAIS) the chain is on the extracellular side. A helical transmembrane segment spans residues 59–79 (LGNSVSLGLSPAFGVLAGFCV). At 80–85 (DRLPPR) the chain is on the cytoplasmic side. A helical membrane pass occupies residues 86–106 (FMMALSTILLFTGLWISSTLA). Over 107-108 (AN) the chain is Extracellular. A helical membrane pass occupies residues 109–129 (IYVVTFTYCLFASIGTACMLS). Topologically, residues 130 to 144 (PGAAATSSWFNRYQG) are cytoplasmic. The chain crosses the membrane as a helical span at residues 145–165 (LAMGINFAGGGIGSAIIPPLA). At 166–175 (GKWVVAYGWR) the chain is on the extracellular side. Residues 176-196 (KAFQLMSIFCAIGVLATALSA) form a helical membrane-spanning segment. The Cytoplasmic segment spans residues 197–344 (RRREPKRDDS…MFTLPFMGNF (148 aa)). The tract at residues 198 to 293 (RREPKRDDSS…EGLDVTEQSQ (96 aa)) is disordered. Positions 244–255 (NEGKEDVREMGR) are enriched in basic and acidic residues. Residues 345–365 (LCWFIYSWAFYSLIYAAVPYI) form a helical membrane-spanning segment. The Extracellular segment spans residues 366-386 (SSMGKPGTVYAGVPPIPTDVA). Residues 387–407 (ATLFTFYGVFQVVGSVLVGWL) traverse the membrane as a helical segment. The Cytoplasmic portion of the chain corresponds to 408-412 (ASLVT). Residues 413-433 (AEFAYVFCATVGGIGCGLLAL) traverse the membrane as a helical segment. Residues 434 to 437 (GRSY) lie on the Extracellular side of the membrane. Residues 438 to 458 (VAFALLLCIIGFCMAGMFAVM) traverse the membrane as a helical segment. Topologically, residues 459 to 470 (PTLIATHLYGPN) are cytoplasmic. Residues 471 to 491 (LGFYFGAVFLAGVVGGFVAPP) traverse the membrane as a helical segment. At 492 to 505 (MQATIQLRNNGSYA) the chain is on the extracellular side. N-linked (GlcNAc...) asparagine glycosylation is present at Asn-501. A helical membrane pass occupies residues 506-526 (FVCVVMSVSMTLSALVCYATL). The Cytoplasmic segment spans residues 527 to 547 (WRSKRSGIVLAARKTKLVEIM).

It belongs to the major facilitator superfamily. RibJ family.

Its subcellular location is the cell membrane. Transporter involved in riboflavin (vitamin B2) uptake. Also transports FMN and FAD. In Trypanosoma brucei brucei (strain 927/4 GUTat10.1), this protein is Riboflavin transporter RibJ.